The sequence spans 271 residues: RELT-like protein 1 (271 aa).

The signal sequence occupies residues 1 to 23 (MAPRALPGSAVLAAAVFVGGAVS). Topologically, residues 24–57 (SPLVAPDNGSSRTLHSRTETTPSPSNDTGNGHPE) are extracellular. The interval 28-53 (APDNGSSRTLHSRTETTPSPSNDTGN) is disordered. Residues asparagine 31 and asparagine 49 are each glycosylated (N-linked (GlcNAc...) asparagine). Residues 31-52 (NGSSRTLHSRTETTPSPSNDTG) are compositionally biased toward polar residues. The helical transmembrane segment at 58–78 (YIAYALVPVFFIMGLFGVLIC) threads the bilayer. Residues 79–271 (HLLKKKGYRC…PVKRERSGTE (193 aa)) lie on the Cytoplasmic side of the membrane. The stretch at 89 to 113 (TTEAEQDIEEEKVEKIELNDSVNEN) forms a coiled coil. Phosphoserine occurs at positions 109 and 114. 2 disordered regions span residues 145–173 (DPES…TPGK) and 233–271 (VEHK…SGTE). The segment covering 155–165 (PGSPPVSPGPL) has biased composition (pro residues). The span at 233–244 (VEHKSNQKERRS) shows a compositional bias: basic and acidic residues. Phosphoserine occurs at positions 244 and 247.

It belongs to the RELT family. Interacts with RELT, RELL2 and OXSR1. Interacts with PLSCR1. Post-translationally, phosphorylated in vitro by OXSR1. Widely expressed. Expressed at highest levels in the placenta, skeletal muscle, spleen and testis.

The protein resides in the cell membrane. In terms of biological role, induces activation of MAPK14/p38 cascade, when overexpressed. Induces apoptosis, when overexpressed. In Homo sapiens (Human), this protein is RELT-like protein 1 (RELL1).